A 1553-amino-acid polypeptide reads, in one-letter code: Mediator of RNA polymerase II transcription subunit 14 (1553 aa).

2 short sequence motifs (LXXLL motif) span residues 55–59 (LAELL) and 472–476 (LPALL). Phosphoserine is present on serine 615. 3 disordered regions span residues 699–723 (FATQ…GTSG), 1006–1199 (ASHE…LNRP), and 1513–1553 (GVGS…GGPQ). Serine 1015 carries the post-translational modification Phosphoserine. Composition is skewed to low complexity over residues 1024-1039 (GGPS…GSSP) and 1065-1080 (PSSS…HPSA). The segment covering 1081-1090 (GAGGGSGPQG) has biased composition (gly residues). Positions 1099–1108 (PPAPHMPHPS) are enriched in pro residues. The segment covering 1131–1155 (GPNTLYMQSHQDSPFTAMSPANNNW) has biased composition (polar residues). Positions 1159–1169 (PSMPRPSPRPG) are enriched in pro residues. Over residues 1177–1193 (TGGGAGVAGGTDRGGSR) the composition is skewed to gly residues. Residues 1515 to 1534 (GSSPNPMMPMQQLPQQVGPQ) are compositionally biased toward low complexity.

The protein belongs to the Mediator complex subunit 14 family. Component of the Mediator complex, which may include CDK8, MED4, MED6, MED11, MED14, MED17, MED18, MED20, MED21, MED22, MED27, MED28, MED30 and MED31.

Its subcellular location is the nucleus. Functionally, component of the Mediator complex, a coactivator involved in the regulated transcription of nearly all RNA polymerase II-dependent genes. Mediator functions as a bridge to convey information from gene-specific regulatory proteins to the basal RNA polymerase II transcription machinery. Mediator is recruited to promoters by direct interactions with regulatory proteins and serves as a scaffold for the assembly of a functional pre-initiation complex with RNA polymerase II and the general transcription factors. Required for activated transcription of the MtnA, MtnB and MtnD genes. This chain is Mediator of RNA polymerase II transcription subunit 14 (MED14), found in Drosophila melanogaster (Fruit fly).